The following is a 489-amino-acid chain: Threonine/serine exporter (489 aa).

10 helical membrane passes run 151-171, 174-194, 206-226, 233-253, 268-288, 314-334, 335-355, 356-376, 381-401, and 420-440; these read GFPV…VLLG, WQVS…TSFL, VVGG…ALQF, SQII…VQSL, FFET…GIQL, IIAG…EWSS, VIIA…FVVY, LGPV…GGLL, LIPP…GLAI, and IAVA…GEWI. The disordered stretch occupies residues 464-489; that stretch reads FQEEAEQNQRRQRKRPKTNQRFGNKR. The segment covering 473-489 has biased composition (basic residues); the sequence is RRQRKRPKTNQRFGNKR.

It belongs to the ThrE exporter (TC 2.A.79) family.

The protein localises to the cell membrane. The enzyme catalyses L-threonine(in) + H(+)(out) = L-threonine(out) + H(+)(in). Its activity is regulated as follows. Transport is inhibited by the proton ionophore carbonyl cyanide m-chlorophenylhydrazone (CCCP). Catalyzes the export of L-threonine and L-serine from the cell to the extracellular environment. Export is dependent on the proton motive force. This chain is Threonine/serine exporter, found in Corynebacterium glutamicum (Brevibacterium saccharolyticum).